The primary structure comprises 308 residues: Porphobilinogen deaminase (308 aa).

S-(dipyrrolylmethanemethyl)cysteine is present on C240.

The protein belongs to the HMBS family. Monomer. Dipyrromethane is required as a cofactor.

The enzyme catalyses 4 porphobilinogen + H2O = hydroxymethylbilane + 4 NH4(+). The protein operates within porphyrin-containing compound metabolism; protoporphyrin-IX biosynthesis; coproporphyrinogen-III from 5-aminolevulinate: step 2/4. In terms of biological role, tetrapolymerization of the monopyrrole PBG into the hydroxymethylbilane pre-uroporphyrinogen in several discrete steps. In Maridesulfovibrio salexigens (strain ATCC 14822 / DSM 2638 / NCIMB 8403 / VKM B-1763) (Desulfovibrio salexigens), this protein is Porphobilinogen deaminase.